The chain runs to 342 residues: Glycerol-1-phosphate dehydrogenase [NAD(P)+] (342 aa).

NAD(+)-binding positions include 84–88 (GRPLD) and 106–109 (TSAS). Asp-111 provides a ligand contact to substrate. NAD(+) is bound at residue Ser-115. Position 160 (Asp-160) interacts with substrate. Zn(2+) is bound by residues Asp-160 and His-241. A substrate-binding site is contributed by His-245. His-260 contacts Zn(2+).

Belongs to the glycerol-1-phosphate dehydrogenase family. In terms of assembly, homodimer. Zn(2+) serves as cofactor.

It localises to the cytoplasm. The catalysed reaction is sn-glycerol 1-phosphate + NAD(+) = dihydroxyacetone phosphate + NADH + H(+). It carries out the reaction sn-glycerol 1-phosphate + NADP(+) = dihydroxyacetone phosphate + NADPH + H(+). The protein operates within membrane lipid metabolism; glycerophospholipid metabolism. Catalyzes the NAD(P)H-dependent reduction of dihydroxyacetonephosphate (DHAP or glycerone phosphate) to glycerol 1-phosphate (G1P). The G1P thus generated is used as the glycerophosphate backbone of phospholipids in the cellular membranes of Archaea. The sequence is that of Glycerol-1-phosphate dehydrogenase [NAD(P)+] from Pyrobaculum neutrophilum (strain DSM 2338 / JCM 9278 / NBRC 100436 / V24Sta) (Thermoproteus neutrophilus).